Consider the following 61-residue polypeptide: Small ribosomal subunit protein uS14 (61 aa).

4 residues coordinate Zn(2+): C24, C27, C40, and C43.

Belongs to the universal ribosomal protein uS14 family. Zinc-binding uS14 subfamily. As to quaternary structure, part of the 30S ribosomal subunit. Contacts proteins S3 and S10. It depends on Zn(2+) as a cofactor.

Functionally, binds 16S rRNA, required for the assembly of 30S particles and may also be responsible for determining the conformation of the 16S rRNA at the A site. The sequence is that of Small ribosomal subunit protein uS14 from Thermotoga maritima (strain ATCC 43589 / DSM 3109 / JCM 10099 / NBRC 100826 / MSB8).